Here is a 425-residue protein sequence, read N- to C-terminus: Gamma-glutamyl phosphate reductase (425 aa).

The protein belongs to the gamma-glutamyl phosphate reductase family.

It is found in the cytoplasm. It catalyses the reaction L-glutamate 5-semialdehyde + phosphate + NADP(+) = L-glutamyl 5-phosphate + NADPH + H(+). The protein operates within amino-acid biosynthesis; L-proline biosynthesis; L-glutamate 5-semialdehyde from L-glutamate: step 2/2. In terms of biological role, catalyzes the NADPH-dependent reduction of L-glutamate 5-phosphate into L-glutamate 5-semialdehyde and phosphate. The product spontaneously undergoes cyclization to form 1-pyrroline-5-carboxylate. In Aromatoleum aromaticum (strain DSM 19018 / LMG 30748 / EbN1) (Azoarcus sp. (strain EbN1)), this protein is Gamma-glutamyl phosphate reductase.